Reading from the N-terminus, the 93-residue chain is Consomatin G1 (93 aa).

The N-terminal stretch at 1–22 (MQTAYWVMLMMMVCITAPLPEG) is a signal peptide. Positions 23-69 (GKPNSGIRGLVPNDLTPQHTLRSLISRRQTDVLLDATLLTTPAPEQR) are excised as a propeptide. Cysteine 72 and cysteine 77 are oxidised to a cystine. A D-tryptophan modification is found at tryptophan 74. Positions 79–93 (PRPYPWRRRDLNGKR) are excised as a propeptide.

This sequence belongs to the conotoxin C superfamily. Consomatin family. As to expression, expressed by the venom duct.

Its subcellular location is the secreted. In terms of biological role, potently activates human somatostatin receptors (SSTR) with a specific activation of SSTR2 (EC(50)=2.6 nM). The sequence is that of Consomatin G1 from Conus geographus (Geography cone).